The primary structure comprises 73 residues: Homeodomain-only protein (73 aa).

Positions 3-62 (AQTASGPTEDQVEILEYNFNKVNKHPDPTTLCLIAAEAGLTEEQTQKWFKQRLAEWRRSE) form a DNA-binding region, homeobox; degenerate.

In terms of assembly, interacts with serum response factor (SRF). Component of a large complex containing histone deacetylases such as HDAC2. Interacts with the acetylated forms of HSPA1A and HSPA1B. Interacts with HSPA8. As to expression, expressed in the embryonic and adult heart and in the adult brain, liver, lung, skeletal muscle, intestine and spleen. Throughout embryonic and postnatal development, it is expressed in the myocardium.

It localises to the nucleus. Its subcellular location is the cytoplasm. Atypical homeodomain protein which does not bind DNA and is required to modulate cardiac growth and development. Acts via its interaction with SRF, thereby modulating the expression of SRF-dependent cardiac-specific genes and cardiac development. Prevents SRF-dependent transcription either by inhibiting SRF binding to DNA or by recruiting histone deacetylase (HDAC) proteins that prevent transcription by SRF. Overexpression causes cardiac hypertrophy. Acts as a co-chaperone for HSPA1A and HSPA1B chaperone proteins and assists in chaperone-mediated protein refolding. In Mus musculus (Mouse), this protein is Homeodomain-only protein (Hopx).